Consider the following 250-residue polypeptide: Probable transcriptional regulatory protein RER_29220 (250 aa).

It belongs to the TACO1 family.

It is found in the cytoplasm. This chain is Probable transcriptional regulatory protein RER_29220, found in Rhodococcus erythropolis (strain PR4 / NBRC 100887).